Reading from the N-terminus, the 291-residue chain is Heterogeneous nuclear ribonucleoprotein D-like-B (291 aa).

2 RRM domains span residues 34–116 (SKMF…QGKE) and 119–196 (KKVF…AAQP). The interval 196 to 226 (PKEVYRQQQQKQQKGGRGGTRGRGRGQGYSN) is disordered. The span at 210–222 (GGRGGTRGRGRGQ) shows a compositional bias: gly residues.

The protein localises to the nucleus. It is found in the cytoplasm. In terms of biological role, acts as a transcriptional regulator. Binds DNA and RNA. In Xenopus laevis (African clawed frog), this protein is Heterogeneous nuclear ribonucleoprotein D-like-B (hnrnpdl-b).